A 283-amino-acid polypeptide reads, in one-letter code: S-methyl-5'-thioadenosine phosphorylase (283 aa).

Residue T18 participates in phosphate binding. An N6-acetyllysine modification is found at K51. Residues R60 to H61 and T93 to A94 contribute to the phosphate site. Substrate is bound at residue M196. T197 serves as a coordination point for phosphate. D220–D222 is a binding site for substrate.

The protein belongs to the PNP/MTAP phosphorylase family. MTAP subfamily. Homotrimer. In terms of tissue distribution, ubiquitously expressed.

Its subcellular location is the cytoplasm. The protein localises to the nucleus. The enzyme catalyses S-methyl-5'-thioadenosine + phosphate = 5-(methylsulfanyl)-alpha-D-ribose 1-phosphate + adenine. The protein operates within amino-acid biosynthesis; L-methionine biosynthesis via salvage pathway; S-methyl-5-thio-alpha-D-ribose 1-phosphate from S-methyl-5'-thioadenosine (phosphorylase route): step 1/1. Its activity is regulated as follows. Inhibited by 5'-methylthiotubercin and 5'-chloroformycin. Its function is as follows. Catalyzes the reversible phosphorylation of S-methyl-5'-thioadenosine (MTA) to adenine and 5-methylthioribose-1-phosphate. Involved in the breakdown of MTA, a major by-product of polyamine biosynthesis. Responsible for the first step in the methionine salvage pathway after MTA has been generated from S-adenosylmethionine. Has broad substrate specificity with 6-aminopurine nucleosides as preferred substrates. This Homo sapiens (Human) protein is S-methyl-5'-thioadenosine phosphorylase.